Reading from the N-terminus, the 271-residue chain is NADPH-dependent 7-cyano-7-deazaguanine reductase (271 aa).

81 to 83 (IES) contributes to the substrate binding site. 83 to 84 (SK) lines the NADPH pocket. Cys-177 serves as the catalytic Thioimide intermediate. The active-site Proton donor is the Asp-184. 216-217 (HE) contributes to the substrate binding site. An NADPH-binding site is contributed by 245–246 (RG).

Belongs to the GTP cyclohydrolase I family. QueF type 2 subfamily. In terms of assembly, homodimer.

It localises to the cytoplasm. It catalyses the reaction 7-aminomethyl-7-carbaguanine + 2 NADP(+) = 7-cyano-7-deazaguanine + 2 NADPH + 3 H(+). The protein operates within tRNA modification; tRNA-queuosine biosynthesis. Catalyzes the NADPH-dependent reduction of 7-cyano-7-deazaguanine (preQ0) to 7-aminomethyl-7-deazaguanine (preQ1). This is NADPH-dependent 7-cyano-7-deazaguanine reductase from Xanthomonas axonopodis pv. citri (strain 306).